We begin with the raw amino-acid sequence, 536 residues long: Chorismate synthase (536 aa).

His-17 is an active-site residue. A disordered region spans residues 37 to 59 (EDVQPQLNRRRPGQGPLSTQRRE). The active site involves His-104. Residues 344-377 (ERDGCSAATLSRERASDGRTTSRHEEEVERGRER) form a disordered region. Over residues 354–377 (SRERASDGRTTSRHEEEVERGRER) the composition is skewed to basic and acidic residues. Asp-489 is an active-site residue.

This sequence belongs to the chorismate synthase family. FMNH2 serves as cofactor.

The catalysed reaction is 5-O-(1-carboxyvinyl)-3-phosphoshikimate = chorismate + phosphate. The enzyme catalyses FMNH2 + NADP(+) = FMN + NADPH + 2 H(+). The protein operates within metabolic intermediate biosynthesis; chorismate biosynthesis; chorismate from D-erythrose 4-phosphate and phosphoenolpyruvate: step 7/7. In terms of biological role, bifunctional chorismate synthase and flavin reductase. Catalyzes the conversion of 5-enolpyruvylshikimate 3-phosphate (EPSP) to form chorismate. Acts also as a flavin reductase (FR) able to generate reduced flavin mononucleotide in the presence of NADPH. This chain is Chorismate synthase (AROC), found in Toxoplasma gondii.